The chain runs to 126 residues: MGKKSLVKLTRKTNPRIVSLILTLKERANGDSAPIWKDIAKRLEAPSRNYAAVNISKINRHTAEDDVLLIPGKVLGAGLLDHPVTIAALTFSDSAFEKITEAGGKCLSLEEIMEANPKGSGIRIFR.

This sequence belongs to the eukaryotic ribosomal protein eL18 family.

In Methanosarcina acetivorans (strain ATCC 35395 / DSM 2834 / JCM 12185 / C2A), this protein is Large ribosomal subunit protein eL18.